The chain runs to 42 residues: Photosystem II reaction center protein J (42 aa).

The chain crosses the membrane as a helical span at residues 10 to 30 (IPLWLVATVAGLAVIALLGVF).

The protein belongs to the PsbJ family. In terms of assembly, PSII is composed of 1 copy each of membrane proteins PsbA, PsbB, PsbC, PsbD, PsbE, PsbF, PsbH, PsbI, PsbJ, PsbK, PsbL, PsbM, PsbT, PsbX, PsbY, PsbZ, Psb30/Ycf12, at least 3 peripheral proteins of the oxygen-evolving complex and a large number of cofactors. It forms dimeric complexes.

It is found in the plastid. Its subcellular location is the chloroplast thylakoid membrane. Functionally, one of the components of the core complex of photosystem II (PSII). PSII is a light-driven water:plastoquinone oxidoreductase that uses light energy to abstract electrons from H(2)O, generating O(2) and a proton gradient subsequently used for ATP formation. It consists of a core antenna complex that captures photons, and an electron transfer chain that converts photonic excitation into a charge separation. This is Photosystem II reaction center protein J from Chlorokybus atmophyticus (Soil alga).